The following is an 873-amino-acid chain: Protein translocase subunit SecA (873 aa).

Residues Gln-85, 103-107 (GEGKT), and Asp-492 contribute to the ATP site. The span at 835–856 (RYAEEEGKQPIRKENQIGRNDD) shows a compositional bias: basic and acidic residues. The segment at 835–873 (RYAEEEGKQPIRKENQIGRNDDCPCGSGKKYKKCCGKNA) is disordered. Zn(2+)-binding residues include Cys-857, Cys-859, Cys-868, and Cys-869. Positions 863 to 873 (KKYKKCCGKNA) are enriched in basic residues.

It belongs to the SecA family. In terms of assembly, monomer and homodimer. Part of the essential Sec protein translocation apparatus which comprises SecA, SecYEG and auxiliary proteins SecDF. Other proteins may also be involved. Zn(2+) is required as a cofactor.

It localises to the cell membrane. It is found in the cytoplasm. The catalysed reaction is ATP + H2O + cellular proteinSide 1 = ADP + phosphate + cellular proteinSide 2.. In terms of biological role, part of the Sec protein translocase complex. Interacts with the SecYEG preprotein conducting channel. Has a central role in coupling the hydrolysis of ATP to the transfer of proteins into and across the cell membrane, serving as an ATP-driven molecular motor driving the stepwise translocation of polypeptide chains across the membrane. In Desulforamulus reducens (strain ATCC BAA-1160 / DSM 100696 / MI-1) (Desulfotomaculum reducens), this protein is Protein translocase subunit SecA.